A 218-amino-acid chain; its full sequence is Small ribosomal subunit protein uS3c (218 aa).

The 72-residue stretch at 47–118 folds into the KH type-2 domain; sequence VQKHMRISSG…RLNIAIARVP (72 aa).

It belongs to the universal ribosomal protein uS3 family. As to quaternary structure, part of the 30S ribosomal subunit.

The protein resides in the plastid. It localises to the chloroplast. In Nuphar advena (Common spatterdock), this protein is Small ribosomal subunit protein uS3c (rps3).